Reading from the N-terminus, the 229-residue chain is 7-cyano-7-deazaguanine synthase (229 aa).

ATP is bound at residue leucine 15–valine 25. Residues cysteine 194, cysteine 204, cysteine 207, and cysteine 210 each contribute to the Zn(2+) site.

Belongs to the QueC family. It depends on Zn(2+) as a cofactor.

The enzyme catalyses 7-carboxy-7-deazaguanine + NH4(+) + ATP = 7-cyano-7-deazaguanine + ADP + phosphate + H2O + H(+). It functions in the pathway purine metabolism; 7-cyano-7-deazaguanine biosynthesis. Catalyzes the ATP-dependent conversion of 7-carboxy-7-deazaguanine (CDG) to 7-cyano-7-deazaguanine (preQ(0)). The sequence is that of 7-cyano-7-deazaguanine synthase from Pseudomonas syringae pv. syringae (strain B728a).